A 334-amino-acid chain; its full sequence is GTP 3',8-cyclase (334 aa).

Residues 13–239 (RFHRKFYYLR…KVKAANDGPA (227 aa)) enclose the Radical SAM core domain. GTP is bound at residue Arg22. Cys29 and Cys33 together coordinate [4Fe-4S] cluster. Tyr35 is a binding site for S-adenosyl-L-methionine. Residue Cys36 participates in [4Fe-4S] cluster binding. Arg73 serves as a coordination point for GTP. S-adenosyl-L-methionine is bound at residue Gly77. Thr104 provides a ligand contact to GTP. Residue Ser128 participates in S-adenosyl-L-methionine binding. A GTP-binding site is contributed by Lys165. S-adenosyl-L-methionine is bound at residue Met199. [4Fe-4S] cluster contacts are provided by Cys262 and Cys265. 267–269 (RLR) provides a ligand contact to GTP. Cys279 is a [4Fe-4S] cluster binding site.

It belongs to the radical SAM superfamily. MoaA family. As to quaternary structure, monomer and homodimer. Requires [4Fe-4S] cluster as cofactor.

The enzyme catalyses GTP + AH2 + S-adenosyl-L-methionine = (8S)-3',8-cyclo-7,8-dihydroguanosine 5'-triphosphate + 5'-deoxyadenosine + L-methionine + A + H(+). The protein operates within cofactor biosynthesis; molybdopterin biosynthesis. In terms of biological role, catalyzes the cyclization of GTP to (8S)-3',8-cyclo-7,8-dihydroguanosine 5'-triphosphate. The sequence is that of GTP 3',8-cyclase from Vibrio vulnificus (strain CMCP6).